Here is a 908-residue protein sequence, read N- to C-terminus: Protein translocase subunit SecA (908 aa).

Residues glutamine 87, 105 to 109 (GEGKT), and aspartate 512 contribute to the ATP site. A disordered region spans residues 865–908 (GGDDGSDEMMAHTPMIRDGDKVGRNDPCPCGSGRKYKQCHGKLS). The segment covering 879–888 (MIRDGDKVGR) has biased composition (basic and acidic residues). Zn(2+) is bound by residues cysteine 892, cysteine 894, cysteine 903, and histidine 904. Positions 898-908 (RKYKQCHGKLS) are enriched in basic residues.

This sequence belongs to the SecA family. Monomer and homodimer. Part of the essential Sec protein translocation apparatus which comprises SecA, SecYEG and auxiliary proteins SecDF-YajC and YidC. The cofactor is Zn(2+).

The protein localises to the cell inner membrane. Its subcellular location is the cytoplasm. The enzyme catalyses ATP + H2O + cellular proteinSide 1 = ADP + phosphate + cellular proteinSide 2.. Functionally, part of the Sec protein translocase complex. Interacts with the SecYEG preprotein conducting channel. Has a central role in coupling the hydrolysis of ATP to the transfer of proteins into and across the cell membrane, serving both as a receptor for the preprotein-SecB complex and as an ATP-driven molecular motor driving the stepwise translocation of polypeptide chains across the membrane. The chain is Protein translocase subunit SecA from Shewanella sp. (strain MR-4).